Reading from the N-terminus, the 269-residue chain is Formamidopyrimidine-DNA glycosylase (269 aa).

Pro-2 acts as the Schiff-base intermediate with DNA in catalysis. Glu-3 acts as the Proton donor in catalysis. Catalysis depends on Lys-57, which acts as the Proton donor; for beta-elimination activity. Positions 90, 109, and 150 each coordinate DNA. The FPG-type zinc-finger motif lies at 235–269 (QVYGRKGEPCRVCGTPIVATKHAQRATFYCRHCQK). The active-site Proton donor; for delta-elimination activity is Arg-259.

It belongs to the FPG family. As to quaternary structure, monomer. The cofactor is Zn(2+).

It catalyses the reaction Hydrolysis of DNA containing ring-opened 7-methylguanine residues, releasing 2,6-diamino-4-hydroxy-5-(N-methyl)formamidopyrimidine.. The enzyme catalyses 2'-deoxyribonucleotide-(2'-deoxyribose 5'-phosphate)-2'-deoxyribonucleotide-DNA = a 3'-end 2'-deoxyribonucleotide-(2,3-dehydro-2,3-deoxyribose 5'-phosphate)-DNA + a 5'-end 5'-phospho-2'-deoxyribonucleoside-DNA + H(+). In terms of biological role, involved in base excision repair of DNA damaged by oxidation or by mutagenic agents. Acts as a DNA glycosylase that recognizes and removes damaged bases. Has a preference for oxidized purines, such as 7,8-dihydro-8-oxoguanine (8-oxoG). Has AP (apurinic/apyrimidinic) lyase activity and introduces nicks in the DNA strand. Cleaves the DNA backbone by beta-delta elimination to generate a single-strand break at the site of the removed base with both 3'- and 5'-phosphates. This Salmonella enteritidis PT4 (strain P125109) protein is Formamidopyrimidine-DNA glycosylase.